The following is a 127-amino-acid chain: Sulfiredoxin (127 aa).

Belongs to the sulfiredoxin family. The cofactor is Mg(2+). Post-translationally, forms a transient disulfide bond with TSA1 during the reduction of cysteine sulfinic acid (-SO2H).

Its subcellular location is the cytoplasm. The protein localises to the nucleus. It catalyses the reaction S-hydroxy-S-oxy-L-cysteinyl-[peroxiredoxin] + [protein]-dithiol + ATP = S-hydroxy-L-cysteinyl-[peroxiredoxin] + [protein]-disulfide + ADP + phosphate. In terms of biological role, contributes to oxidative stress resistance by reducing cysteine-sulfinic acid formed under exposure to oxidants in the peroxiredoxin TSA1. May catalyze the reduction in a multi-step process by acting both as a specific phosphotransferase and as thioltransferase. This Saccharomyces cerevisiae (strain ATCC 204508 / S288c) (Baker's yeast) protein is Sulfiredoxin.